An 827-amino-acid polypeptide reads, in one-letter code: Beta-galactosidase 2 (827 aa).

The signal sequence occupies residues 1 to 24 (MAASAVAVAFVVAVAAVLAAAASA). The active-site Proton donor is Glu182. Asn209 carries an N-linked (GlcNAc...) asparagine glycan. Glu251 acts as the Nucleophile in catalysis. Asn458 carries N-linked (GlcNAc...) asparagine glycosylation. An SUEL-type lectin domain is found at 741 to 827 (DYEKAKVHLQ…KRAVVEAICG (87 aa)).

It belongs to the glycosyl hydrolase 35 family.

Its subcellular location is the secreted. The protein resides in the extracellular space. The protein localises to the apoplast. The enzyme catalyses Hydrolysis of terminal non-reducing beta-D-galactose residues in beta-D-galactosides.. This is Beta-galactosidase 2 from Oryza sativa subsp. japonica (Rice).